The sequence spans 1002 residues: BTB/POZ domain-containing protein At1g04390 (1002 aa).

2 BTB domains span residues Ser-680–Ser-758 and Ser-808–Pro-889.

The protein operates within protein modification; protein ubiquitination. Its function is as follows. May act as a substrate-specific adapter of an E3 ubiquitin-protein ligase complex (CUL3-RBX1-BTB) which mediates the ubiquitination and subsequent proteasomal degradation of target proteins. The polypeptide is BTB/POZ domain-containing protein At1g04390 (Arabidopsis thaliana (Mouse-ear cress)).